The primary structure comprises 235 residues: 7-cyano-7-deazaguanine synthase (235 aa).

Position 7–17 (C7–A17) interacts with ATP. The Zn(2+) site is built by C185, C193, C196, and C199.

Belongs to the QueC family. Requires Zn(2+) as cofactor.

It catalyses the reaction 7-carboxy-7-deazaguanine + NH4(+) + ATP = 7-cyano-7-deazaguanine + ADP + phosphate + H2O + H(+). It participates in purine metabolism; 7-cyano-7-deazaguanine biosynthesis. In terms of biological role, catalyzes the ATP-dependent conversion of 7-carboxy-7-deazaguanine (CDG) to 7-cyano-7-deazaguanine (preQ(0)). The polypeptide is 7-cyano-7-deazaguanine synthase (Allorhizobium ampelinum (strain ATCC BAA-846 / DSM 112012 / S4) (Agrobacterium vitis (strain S4))).